The sequence spans 163 residues: Putative 4-hydroxy-4-methyl-2-oxoglutarate aldolase (163 aa).

Substrate-binding positions include 76-79 and arginine 98; that span reads GDML. Position 99 (aspartate 99) interacts with a divalent metal cation.

This sequence belongs to the class II aldolase/RraA-like family. Homotrimer. The cofactor is a divalent metal cation.

It catalyses the reaction 4-hydroxy-4-methyl-2-oxoglutarate = 2 pyruvate. It carries out the reaction oxaloacetate + H(+) = pyruvate + CO2. Its function is as follows. Catalyzes the aldol cleavage of 4-hydroxy-4-methyl-2-oxoglutarate (HMG) into 2 molecules of pyruvate. Also contains a secondary oxaloacetate (OAA) decarboxylase activity due to the common pyruvate enolate transition state formed following C-C bond cleavage in the retro-aldol and decarboxylation reactions. The sequence is that of Putative 4-hydroxy-4-methyl-2-oxoglutarate aldolase from Pseudomonas putida (strain ATCC 47054 / DSM 6125 / CFBP 8728 / NCIMB 11950 / KT2440).